The primary structure comprises 188 residues: Guanylate kinase (188 aa).

The Guanylate kinase-like domain maps to T2 to A183. A9–S16 contacts ATP.

Belongs to the guanylate kinase family.

The protein localises to the cytoplasm. The enzyme catalyses GMP + ATP = GDP + ADP. Its function is as follows. Essential for recycling GMP and indirectly, cGMP. This chain is Guanylate kinase, found in Porphyromonas gingivalis (strain ATCC BAA-308 / W83).